The sequence spans 520 residues: MAACTAAQQLLLVLSALGLLAAGAPQPPNIVLLLMDDMGWGDLGVNGEPSRETPNLDRMAAEGMLFPSFYSANPLCSPSRAALLTGRLPIRNGFYTTNAHARNAYTPQEIMGGIPNSEHLLPELLKKAGYTNKIVGKWHLGHRPQFHPLKHGFDEWFGSPNCHFGPYDNKAKPNIPVYRDWEMVGRFYEEFPINRKTGEANLTQLYTQEALDFIQTQHARQSPFFLYWAIDATHAPVYASRQFLGTSLRGRYGDAVREIDDSVGKILSLLQNLGISKNTFVFFTSDNGAALISAPNEGGSNGPFLCGKQTTFEGGMREPAIAWWPGHIAAGQVSHQLGSIMDLFTTSLSLAGLKPPSDRVIDGLDLLPTMLKGQMMDRPIFYYRGNTLMAVTLGQYKAHLWTWTNSWEEFTQGTDFCPGQNVSGVTTHTQEEHTELPLIFHLGRDPGERFPLSFHSDEYQDALSRTTQVVQEHQKSLVPGQPQLNVCNQAVMNWAPPGCEKLGKCLTPPESVPEKCFWAH.

The first 23 residues, 1 to 23 (MAACTAAQQLLLVLSALGLLAAG), serve as a signal peptide directing secretion. The catalytic domain stretch occupies residues 24–377 (APQPPNIVLL…PTMLKGQMMD (354 aa)). Ca(2+) is bound by residues D36, D37, and C76. C76 (nucleophile) is an active-site residue. Residue C76 is modified to 3-oxoalanine (Cys). H139 is a catalytic residue. N201 is a glycosylation site (N-linked (GlcNAc...) asparagine). Ca(2+) contacts are provided by D286 and N287. Cysteines 306 and 417 form a disulfide. An N-linked (GlcNAc...) asparagine glycan is attached at N421. Disulfide bonds link C487–C516 and C499–C505.

Belongs to the sulfatase family. In terms of assembly, homodimer. Requires Ca(2+) as cofactor. Post-translationally, the conversion to 3-oxoalanine (also known as C-formylglycine, FGly), of a serine or cysteine residue in prokaryotes and of a cysteine residue in eukaryotes, is critical for catalytic activity. In terms of tissue distribution, widely expressed. Higher expression in liver and kidney.

It is found in the lysosome. It catalyses the reaction Hydrolysis of the 6-sulfate groups of the N-acetyl-D-galactosamine 6-sulfate units of chondroitin sulfate and of the D-galactose 6-sulfate units of keratan sulfate.. The polypeptide is N-acetylgalactosamine-6-sulfatase (Galns) (Mus musculus (Mouse)).